A 3122-amino-acid chain; its full sequence is Large tegument protein deneddylase (3122 aa).

The interval 1-248 (MIPAALPHPT…SETYLQDEPF (248 aa)) is deubiquitination activity. Residues 20-238 (VVTGVRNQFA…TAAALHLYGA (219 aa)) form the Peptidase C76 domain. Active-site residues include C40, D172, and H174. 2 disordered regions span residues 281–367 (GSGP…GDAA) and 387–496 (RARY…PPGA). Positions 343 to 353 (SAPDAAASGPP) are enriched in low complexity. 2 stretches are compositionally biased toward basic residues: residues 387-400 (RARY…RRRP) and 425-436 (KAKKKSAPKKKA). A compositionally biased stretch (low complexity) spans 437-454 (PVAAEVPASSPTPIAATV). Positions 548–578 (LELCVIFFFERVLAFLIENGARTHTQAGVAG) are interaction with inner tegument protein. Disordered regions lie at residues 2494–2539 (YQRP…ADPG), 2570–2974 (ASDD…THLP), and 3006–3059 (SDDE…SQFG). Composition is skewed to pro residues over residues 2578-2590 (TPNP…PPPA) and 2637-2654 (PSPP…PPPA). Residues 2655–2667 (FSGSAAAFSAAVP) are compositionally biased toward low complexity. The segment covering 2668–2681 (RVRRSRRTRAKSRA) has biased composition (basic residues). Composition is skewed to pro residues over residues 2690–2700 (GWRPPALPAPV) and 2710–2719 (PDQPPTPESA). Residues 2734–2743 (ASARGAFPAP) are compositionally biased toward low complexity. Composition is skewed to pro residues over residues 2744–2753 (TLAPIPPPPA) and 2775–2785 (SPTPPRGPAAG). 2 stretches are compositionally biased toward low complexity: residues 2786–2807 (PPRR…SLPS) and 2814–2825 (HAAAVSAAAAAV). Residues 2841-2852 (SPPPLAPGPVAP) are compositionally biased toward pro residues. The span at 2853 to 2867 (SEPLCGWVVPGGPVA) shows a compositional bias: low complexity. 11 repeat units span residues 2891-2895 (PQPPL), 2896-2900 (PQPPL), 2901-2905 (PQPPL), 2906-2910 (PQPPL), 2911-2915 (PQPPL), 2916-2920 (PQPPL), 2921-2925 (PQPPL), 2926-2930 (PQPPL), 2931-2935 (PQPPL), 2936-2940 (PQPPL), and 2941-2945 (PQPPL). Residues 2891–2945 (PQPPLPQPPLPQPPLPQPPLPQPPLPQPPLPQPPLPQPPLPQPPLPQPPLPQPPL) form an 11 X 5 AA tandem repeats of P-Q-P-P-L region. Over residues 2891-2947 (PQPPLPQPPLPQPPLPQPPLPQPPLPQPPLPQPPLPQPPLPQPPLPQPPLPQPPLPP) the composition is skewed to pro residues. Polar residues-rich tracts occupy residues 2950-2959 (RTLTPQSRDS) and 2965-2974 (SPTHTNTHLP). The segment covering 3006–3020 (SDDEHSDADSLRFSD) has biased composition (basic and acidic residues). Positions 3029–3045 (PLPPEPHLPPADEPPGP) are enriched in pro residues.

Belongs to the herpesviridae large tegument protein family. Interacts with host CUL1 and CUL4A; these interactions inhibit the E3 ligase activity of cullins. Interacts with inner tegument protein. Interacts with capsid vertex specific component CVC2. Interacts with the major capsid protein/MCP. Post-translationally, proteolytically processed, possibly into several polypeptides. Enzymatic activity is only detectable following cleavage of the UL36 protein, which occurs late during viral replication.

It localises to the virion tegument. The protein resides in the host cytoplasm. Its subcellular location is the host nucleus. The enzyme catalyses Thiol-dependent hydrolysis of ester, thioester, amide, peptide and isopeptide bonds formed by the C-terminal Gly of ubiquitin (a 76-residue protein attached to proteins as an intracellular targeting signal).. In terms of biological role, large tegument protein that plays multiple roles in the viral cycle. During viral entry, remains associated with the capsid while most of the tegument is detached and participates in the capsid transport toward the host nucleus. Plays a role in the routing of the capsid at the nuclear pore complex and subsequent uncoating. Within the host nucleus, acts as a deneddylase and promotes the degradation of nuclear CRLs (cullin-RING ubiquitin ligases) and thereby stabilizes nuclear CRL substrates, while cytoplasmic CRLs remain unaffected. These modifications prevent host cell cycle S-phase progression and create a favorable environment allowing efficient viral genome replication. Participates later in the secondary envelopment of capsids. Indeed, plays a linker role for the association of the outer viral tegument to the capsids together with the inner tegument protein. The protein is Large tegument protein deneddylase of Human herpesvirus 2 (strain HG52) (HHV-2).